The primary structure comprises 570 residues: Proline--tRNA ligase (570 aa).

It belongs to the class-II aminoacyl-tRNA synthetase family. ProS type 1 subfamily. As to quaternary structure, homodimer.

Its subcellular location is the cytoplasm. The catalysed reaction is tRNA(Pro) + L-proline + ATP = L-prolyl-tRNA(Pro) + AMP + diphosphate. Functionally, catalyzes the attachment of proline to tRNA(Pro) in a two-step reaction: proline is first activated by ATP to form Pro-AMP and then transferred to the acceptor end of tRNA(Pro). As ProRS can inadvertently accommodate and process non-cognate amino acids such as alanine and cysteine, to avoid such errors it has two additional distinct editing activities against alanine. One activity is designated as 'pretransfer' editing and involves the tRNA(Pro)-independent hydrolysis of activated Ala-AMP. The other activity is designated 'posttransfer' editing and involves deacylation of mischarged Ala-tRNA(Pro). The misacylated Cys-tRNA(Pro) is not edited by ProRS. The polypeptide is Proline--tRNA ligase (Clostridium botulinum (strain Eklund 17B / Type B)).